A 1488-amino-acid polypeptide reads, in one-letter code: Indigoidine synthase (1488 aa).

The segment at 229-585 (KNRAQRHPEQ…GGDGVARGYL (357 aa)) is adenylation. In terms of domain architecture, Carrier spans 1137–1212 (APRNPLEHQV…KLAAWLSRAR (76 aa)). O-(pantetheine 4'-phosphoryl)serine is present on serine 1172. A thioesterase region spans residues 1230-1346 (PIYCWPGLGG…ERVAAMNRKA (117 aa)).

This sequence belongs to the ATP-dependent AMP-binding enzyme family. It depends on pantetheine 4'-phosphate as a cofactor.

It catalyses the reaction 2 FMN + 2 L-glutamine + 2 ATP + O2 = indigoidine + 2 FMNH2 + 2 AMP + 2 diphosphate + 2 H2O. It carries out the reaction FMN + L-glutamine + ATP = 3-amino-1,5-dihydropyridine-2,6-dione + FMNH2 + AMP + diphosphate. The catalysed reaction is 2 3-amino-1,5-dihydropyridine-2,6-dione + O2 = indigoidine + 2 H2O. Its pathway is pigment biosynthesis. In terms of biological role, nonribosomal peptide synthetase involved in the biosynthesis of the blue pigment indigoidine, which is implicated in pathogenicity and protection from oxidative stress. Catalyzes the synthesis of the blue pigment using L-Gln as a substrate. Two glutamine molecules are cyclized and oxidized to form indigoidine. In Dickeya dadantii (strain 3937) (Erwinia chrysanthemi (strain 3937)), this protein is Indigoidine synthase.